The chain runs to 130 residues: Large ribosomal subunit protein bL21 (130 aa).

The protein belongs to the bacterial ribosomal protein bL21 family. In terms of assembly, part of the 50S ribosomal subunit. Contacts protein L20.

Functionally, this protein binds to 23S rRNA in the presence of protein L20. The polypeptide is Large ribosomal subunit protein bL21 (Trichormus variabilis (strain ATCC 29413 / PCC 7937) (Anabaena variabilis)).